We begin with the raw amino-acid sequence, 470 residues long: Nuclear segregation protein BFR1 (470 aa).

2 coiled-coil regions span residues 17–178 and 237–281; these read DKKL…NGLN and NEFK…THAK. Serine 260 bears the Phosphoserine mark. Threonine 336 is modified (phosphothreonine). The tract at residues 346–368 is disordered; sequence APSKSKKYKKKNQQKNTENEQPA. Residues 349–358 are compositionally biased toward basic residues; that stretch reads KSKKYKKKNQ. A Phosphoserine modification is found at serine 369. Residues 398 to 469 are a coiled coil; the sequence is NSDDVKITVE…EQEESEKDKE (72 aa). Positions 447–470 are disordered; that stretch reads QQVKKELEEKRLKEQEESEKDKEN.

Implicated in secretion, nuclear segregation and in maintenance of cell size. The sequence is that of Nuclear segregation protein BFR1 (BFR1) from Saccharomyces cerevisiae (strain ATCC 204508 / S288c) (Baker's yeast).